Reading from the N-terminus, the 323-residue chain is MFNFANFYQLIAQDTRLQPWLNVLPQQLTDWQNAEHGDFGRWLKALNKIPEGSPDQVDIKNSVTISNDTPFHEGELKKLENLLRTFHPWRKGPYTVHGIHIDTEWRSDWKWDRVLPHISPLKNRSVLDVGCGNGYHMWRMLGEGARLCVGIDPSHLFLIQFEAIRKLMGGDQRAHLLPLGIEQLPKLEAFDTVFSMGVLYHRRSPLDHLIQLKDQLVSGGELVLETLVIEGDENAVLVPTSRYAQMRNVYFFPSAKALKVWLELVGFEDVHIVDENVTSVDEQRTTDWMTHNSLPDYLDPNDPSKTVEGYPAPRRAVLVARKP.

Carboxy-S-adenosyl-L-methionine contacts are provided by residues K91, W105, K110, G130, 152-154 (DPS), 181-182 (IE), M196, Y200, and R315.

Belongs to the class I-like SAM-binding methyltransferase superfamily. CmoB family. As to quaternary structure, homotetramer.

It carries out the reaction carboxy-S-adenosyl-L-methionine + 5-hydroxyuridine(34) in tRNA = 5-carboxymethoxyuridine(34) in tRNA + S-adenosyl-L-homocysteine + H(+). Functionally, catalyzes carboxymethyl transfer from carboxy-S-adenosyl-L-methionine (Cx-SAM) to 5-hydroxyuridine (ho5U) to form 5-carboxymethoxyuridine (cmo5U) at position 34 in tRNAs. This Vibrio parahaemolyticus serotype O3:K6 (strain RIMD 2210633) protein is tRNA U34 carboxymethyltransferase.